The following is a 139-amino-acid chain: Ubiquitin-conjugating enzyme spm2 (139 aa).

The region spanning P5–F139 is the UBC core domain.

It belongs to the ubiquitin-conjugating enzyme family. Heterodimer with ubc13.

Functionally, has a role in the DNA error-free postreplication repair (PRR) pathway. Lacks catalytic activity by itself. The ubc13/spm2 heterodimer catalyzes the synthesis of non-canonical poly-ubiquitin chains that are linked through 'Lys-63'. The polypeptide is Ubiquitin-conjugating enzyme spm2 (spm2) (Schizosaccharomyces pombe (strain 972 / ATCC 24843) (Fission yeast)).